The following is a 361-amino-acid chain: Phenylalanine--tRNA ligase alpha subunit (361 aa).

Glu260 contributes to the Mg(2+) binding site.

This sequence belongs to the class-II aminoacyl-tRNA synthetase family. Phe-tRNA synthetase alpha subunit type 1 subfamily. As to quaternary structure, tetramer of two alpha and two beta subunits. Requires Mg(2+) as cofactor.

The protein resides in the cytoplasm. It carries out the reaction tRNA(Phe) + L-phenylalanine + ATP = L-phenylalanyl-tRNA(Phe) + AMP + diphosphate + H(+). This Allorhizobium ampelinum (strain ATCC BAA-846 / DSM 112012 / S4) (Agrobacterium vitis (strain S4)) protein is Phenylalanine--tRNA ligase alpha subunit.